Here is a 393-residue protein sequence, read N- to C-terminus: MNVPATRKDLMIVNMGPHHPSMHGVLRLIVTLDGEDVIDCEPILGYLHRGMEKIAENRTIIQYLPYVTRWDYLATMFTEAITVNGPEQLGNIQVPKRASYIRVIMLELSRIASHLLWLGPFMADIGAQTPFFYIFREREFIYDLFEAATGMRMMHNFFRIGGVAADLPHGWIDKCFDFCNYFFTRVVEYQKLITRNPIFLERVEGVGVVGGEEVINWGLSGPMLRASGIQWDLRQVDNYECYEEFDWEVQWQKEGDSLARYLVRIGEMMESIKIIQQALEGIPGGPYENLEIRCFGREKEPEWNDFEYRFIGKKPSPTFELPKQELYVRVEAPKGELGIFLIGDQNGFPWRWKIRPPGFINLQILPQLVKRMKLADIMTILGSIDIIMGEVDR.

The protein belongs to the complex I 49 kDa subunit family. In terms of assembly, NDH is composed of at least 16 different subunits, 5 of which are encoded in the nucleus.

It localises to the plastid. Its subcellular location is the chloroplast thylakoid membrane. It catalyses the reaction a plastoquinone + NADH + (n+1) H(+)(in) = a plastoquinol + NAD(+) + n H(+)(out). It carries out the reaction a plastoquinone + NADPH + (n+1) H(+)(in) = a plastoquinol + NADP(+) + n H(+)(out). Functionally, NDH shuttles electrons from NAD(P)H:plastoquinone, via FMN and iron-sulfur (Fe-S) centers, to quinones in the photosynthetic chain and possibly in a chloroplast respiratory chain. The immediate electron acceptor for the enzyme in this species is believed to be plastoquinone. Couples the redox reaction to proton translocation, and thus conserves the redox energy in a proton gradient. The polypeptide is NAD(P)H-quinone oxidoreductase subunit H, chloroplastic (Lotus japonicus (Lotus corniculatus var. japonicus)).